We begin with the raw amino-acid sequence, 118 residues long: Large ribosomal subunit protein bL19 (118 aa).

It belongs to the bacterial ribosomal protein bL19 family.

Functionally, this protein is located at the 30S-50S ribosomal subunit interface and may play a role in the structure and function of the aminoacyl-tRNA binding site. This Helicobacter acinonychis (strain Sheeba) protein is Large ribosomal subunit protein bL19.